A 631-amino-acid polypeptide reads, in one-letter code: Phosphomethylpyrimidine synthase (631 aa).

Substrate is bound by residues asparagine 239, methionine 268, tyrosine 297, histidine 333, 353-355 (SRG), 394-397 (DGLR), and glutamate 433. Histidine 437 provides a ligand contact to Zn(2+). Position 460 (tyrosine 460) interacts with substrate. Histidine 501 is a Zn(2+) binding site. [4Fe-4S] cluster-binding residues include cysteine 581, cysteine 584, and cysteine 589.

Belongs to the ThiC family. As to quaternary structure, homodimer. [4Fe-4S] cluster serves as cofactor.

The catalysed reaction is 5-amino-1-(5-phospho-beta-D-ribosyl)imidazole + S-adenosyl-L-methionine = 4-amino-2-methyl-5-(phosphooxymethyl)pyrimidine + CO + 5'-deoxyadenosine + formate + L-methionine + 3 H(+). The protein operates within cofactor biosynthesis; thiamine diphosphate biosynthesis. In terms of biological role, catalyzes the synthesis of the hydroxymethylpyrimidine phosphate (HMP-P) moiety of thiamine from aminoimidazole ribotide (AIR) in a radical S-adenosyl-L-methionine (SAM)-dependent reaction. The polypeptide is Phosphomethylpyrimidine synthase (Shigella boydii serotype 4 (strain Sb227)).